A 460-amino-acid polypeptide reads, in one-letter code: Transcriptional regulatory protein UME1 (460 aa).

The NEE-box signature appears at 14-22 (NEEFKIWKK). 4 WD repeats span residues 233–271 (PGIKNIQEIKFLNNQIFATCSDDGIIRFWGNEIGKKPLW), 276–316 (SLDG…ALGD), 339–379 (FYSE…AIYN), and 411–451 (GENN…VLDG).

Component of the RPD3C(L) complex composed of at least ASH1, CTI6, DEP1, PHO23, RPD3, RXT2, RXT3, SAP30, SDS3, SIN3, UME1 and UME6. Component of the RPD3C(S) complex composed of at least EAF3, RCO1, RPD3, SIN3, and UME1. Interacts with RPD3.

Its subcellular location is the cytoplasm. The protein localises to the nucleus. In terms of biological role, catalytic component of the RPD3 histone deacetylase complexes RPD3C(L) and RPD3C(S) responsible for the deacetylation of lysine residues on the N-terminal part of the core histones (H2A, H2B, H3 and H4). Histone deacetylation gives a tag for epigenetic repression and plays an important role in transcriptional regulation, cell cycle progression and developmental events. In Saccharomyces cerevisiae (strain ATCC 204508 / S288c) (Baker's yeast), this protein is Transcriptional regulatory protein UME1 (UME1).